Here is a 468-residue protein sequence, read N- to C-terminus: ATP synthase subunit beta (468 aa).

150-157 (GGAGVGKT) serves as a coordination point for ATP.

This sequence belongs to the ATPase alpha/beta chains family. As to quaternary structure, F-type ATPases have 2 components, CF(1) - the catalytic core - and CF(0) - the membrane proton channel. CF(1) has five subunits: alpha(3), beta(3), gamma(1), delta(1), epsilon(1). CF(0) has three main subunits: a(1), b(2) and c(9-12). The alpha and beta chains form an alternating ring which encloses part of the gamma chain. CF(1) is attached to CF(0) by a central stalk formed by the gamma and epsilon chains, while a peripheral stalk is formed by the delta and b chains.

The protein localises to the cell inner membrane. The enzyme catalyses ATP + H2O + 4 H(+)(in) = ADP + phosphate + 5 H(+)(out). Its function is as follows. Produces ATP from ADP in the presence of a proton gradient across the membrane. The catalytic sites are hosted primarily by the beta subunits. The polypeptide is ATP synthase subunit beta (Acidovorax ebreus (strain TPSY) (Diaphorobacter sp. (strain TPSY))).